Consider the following 240-residue polypeptide: Ribonuclease 3 (240 aa).

Residues 9–141 form the RNase III domain; it reads VEELQKRLGV…LLAALYLDQG (133 aa). Position 54 (glutamate 54) interacts with Mg(2+). Residue aspartate 58 is part of the active site. Aspartate 127 and glutamate 130 together coordinate Mg(2+). Glutamate 130 is a catalytic residue. The 70-residue stretch at 168–237 folds into the DRBM domain; that stretch reads DYKTALQEIV…ARKAYEKLVA (70 aa).

It belongs to the ribonuclease III family. As to quaternary structure, homodimer. It depends on Mg(2+) as a cofactor.

It localises to the cytoplasm. It catalyses the reaction Endonucleolytic cleavage to 5'-phosphomonoester.. In terms of biological role, digests double-stranded RNA. Involved in the processing of primary rRNA transcript to yield the immediate precursors to the large and small rRNAs (23S and 16S). Processes some mRNAs, and tRNAs when they are encoded in the rRNA operon. Processes pre-crRNA and tracrRNA of type II CRISPR loci if present in the organism. This Thermotoga neapolitana (strain ATCC 49049 / DSM 4359 / NBRC 107923 / NS-E) protein is Ribonuclease 3.